Here is a 243-residue protein sequence, read N- to C-terminus: Undecaprenyl-phosphate mannosyltransferase (243 aa).

The protein belongs to the glycosyltransferase 2 family.

The catalysed reaction is di-trans,octa-cis-undecaprenyl phosphate + GDP-alpha-D-mannose = D-mannosyl di-trans,octa-cis-undecaprenyl phosphate + GDP. Its function is as follows. Catalyzes the transfer of mannose from GDP-mannose to D-mannosyl-1-phosphoundecaprenol. In Micrococcus luteus (strain ATCC 4698 / DSM 20030 / JCM 1464 / CCM 169 / CCUG 5858 / IAM 1056 / NBRC 3333 / NCIMB 9278 / NCTC 2665 / VKM Ac-2230) (Micrococcus lysodeikticus), this protein is Undecaprenyl-phosphate mannosyltransferase.